We begin with the raw amino-acid sequence, 208 residues long: Thymidylate kinase (208 aa).

9–16 (GGEGCGKS) is an ATP binding site.

Belongs to the thymidylate kinase family.

The enzyme catalyses dTMP + ATP = dTDP + ADP. Phosphorylation of dTMP to form dTDP in both de novo and salvage pathways of dTTP synthesis. The polypeptide is Thymidylate kinase (Dehalococcoides mccartyi (strain ATCC BAA-2100 / JCM 16839 / KCTC 5957 / BAV1)).